The chain runs to 68 residues: Large ribosomal subunit protein eL24 (68 aa).

The Zn(2+) site is built by C7, C10, C33, and C37. The C4-type zinc finger occupies 7–37 (CDFCGRIIEPGTGKMFVKNDGTILWFCSSKC).

The protein belongs to the eukaryotic ribosomal protein eL24 family. Part of the 50S ribosomal subunit. Forms a cluster with proteins L3 and L14. It depends on Zn(2+) as a cofactor.

In terms of biological role, binds to the 23S rRNA. This is Large ribosomal subunit protein eL24 from Methanopyrus kandleri (strain AV19 / DSM 6324 / JCM 9639 / NBRC 100938).